Here is a 104-residue protein sequence, read N- to C-terminus: Large ribosomal subunit protein bL21 (104 aa).

It belongs to the bacterial ribosomal protein bL21 family. In terms of assembly, part of the 50S ribosomal subunit. Contacts protein L20.

This protein binds to 23S rRNA in the presence of protein L20. The sequence is that of Large ribosomal subunit protein bL21 from Desulfosudis oleivorans (strain DSM 6200 / JCM 39069 / Hxd3) (Desulfococcus oleovorans).